The primary structure comprises 208 residues: MIAKGSEPWLFTAASVTALFAILSRATDGLPFLNYIANVGMALTFVMVIFFRDPERKVETSDTYMISPADGTVIDIRDRKICIFMFLQNVHVNRAPISGKISEIIYKKGGYLPAFCKDSERNERNEFIIHSKYGDVRVTQIAGIIARRIVTYSNVNDTVEQGQRIGMIRFGSRVDVTIPHDFDITVEKGERVLAGKTIIATIKNDRDF.

The active-site Schiff-base intermediate with substrate; via pyruvic acid is the S172. S172 carries the pyruvic acid (Ser); by autocatalysis modification.

It belongs to the phosphatidylserine decarboxylase family. PSD-A subfamily. Heterodimer of a large membrane-associated beta subunit and a small pyruvoyl-containing alpha subunit. Pyruvate is required as a cofactor. Is synthesized initially as an inactive proenzyme. Formation of the active enzyme involves a self-maturation process in which the active site pyruvoyl group is generated from an internal serine residue via an autocatalytic post-translational modification. Two non-identical subunits are generated from the proenzyme in this reaction, and the pyruvate is formed at the N-terminus of the alpha chain, which is derived from the carboxyl end of the proenzyme. The post-translation cleavage follows an unusual pathway, termed non-hydrolytic serinolysis, in which the side chain hydroxyl group of the serine supplies its oxygen atom to form the C-terminus of the beta chain, while the remainder of the serine residue undergoes an oxidative deamination to produce ammonia and the pyruvoyl prosthetic group on the alpha chain.

It is found in the cell membrane. The enzyme catalyses archaetidylserine + H(+) = archaetidylethanolamine + CO2. In terms of biological role, catalyzes the formation of archaetidylethanolamine (PtdEtn) from archaetidylserine (PtdSer). This Methanosarcina mazei (strain ATCC BAA-159 / DSM 3647 / Goe1 / Go1 / JCM 11833 / OCM 88) (Methanosarcina frisia) protein is Putative archaetidylserine decarboxylase proenzyme.